Consider the following 121-residue polypeptide: Large ribosomal subunit protein uL14 (121 aa).

Belongs to the universal ribosomal protein uL14 family. As to quaternary structure, part of the 50S ribosomal subunit. Forms a cluster with proteins L3 and L19. In the 70S ribosome, L14 and L19 interact and together make contacts with the 16S rRNA in bridges B5 and B8.

Its function is as follows. Binds to 23S rRNA. Forms part of two intersubunit bridges in the 70S ribosome. The polypeptide is Large ribosomal subunit protein uL14 (Prochlorococcus marinus (strain SARG / CCMP1375 / SS120)).